The primary structure comprises 640 residues: Glycosyltransferase-like protein gnt14 (640 aa).

Residues 1-14 (MFGFKTTKNKKRVR) are Cytoplasmic-facing. Residues 15–35 (LLVVAIGVMIFFMCLSNFSSI) form a helical; Signal-anchor for type II membrane protein membrane-spanning segment. The Extracellular segment spans residues 36–640 (QSRQSSSTDT…TENCYSNDHW (605 aa)). Disordered stretches follow at residues 63 to 184 (PSIN…PLSS) and 254 to 277 (NSNNNNNNNNNNNNNNNNNNNNNY). A compositionally biased stretch (low complexity) spans 65 to 171 (ININNSENNI…NININNNNKP (107 aa)). The N-linked (GlcNAc...) asparagine glycan is linked to Asn-68. Residues Asn-410 and Asn-539 are each glycosylated (N-linked (GlcNAc...) asparagine).

Belongs to the glycosyltransferase 8 family. Highly divergent.

It localises to the membrane. This is Glycosyltransferase-like protein gnt14 (gnt14) from Dictyostelium discoideum (Social amoeba).